Consider the following 1111-residue polypeptide: Zinc finger protein GLI1 (1111 aa).

The segment at 52 to 78 is disordered; that stretch reads GYGAARETSSCTEGSLFPPPPPPRSSV. The interval 123-127 is interaction with SUFU; sequence SYGHL. 5 C2H2-type zinc fingers span residues 238–263, 271–298, 304–328, 334–359, and 365–390; these read TDCR…NSEH, FVCH…MRRH, HKCT…LRSH, YMCE…NRTH, and YVCK…KTVH. An interaction with DNA region spans residues 286–294; sequence KAQYMLVVH. Interaction with DNA stretches follow at residues 348 to 353 and 378 to 384; these read ASDRAK and DPSSLRK. Positions 378–487 are disordered; it reads DPSSLRKHVK…EDLSSLDEGP (110 aa). Positions 416 to 431 are enriched in basic and acidic residues; the sequence is EPKREREGGSGREESR. A compositionally biased stretch (polar residues) spans 439-465; the sequence is MPQQSPGAQSSCSSDHSPAGSAANTDS. At Lys-520 the chain carries N6-acetyllysine. 4 disordered regions span residues 528-583, 598-649, 673-692, and 832-891; these read GAPV…LPGL, ARGS…RAAD, TGRN…QPPS, and PCLN…SSHS. Positions 546-562 are enriched in low complexity; the sequence is SSSSSMSSAYTVSRRSS. Residues 640-649 show a composition bias toward basic and acidic residues; it reads RASDPARAAD. Residues 855-870 are compositionally biased toward pro residues; it reads LPQPQYPQSGPYPQPP. Lys-1008 is covalently cross-linked (Glycyl lysine isopeptide (Lys-Gly) (interchain with G-Cter in SUMO2)). Residues 1064–1093 form a disordered region; sequence LSPPLSHEQGDSSKNTPSPSGPPNMAVGNM.

It belongs to the GLI C2H2-type zinc-finger protein family. Interacts with KIF7. Interacts with STK36. Interacts with ZIC1; the interaction enhances transcription activation. Interacts with SUFU; this inhibits transcriptional activation by GLI1. Phosphorylated in vitro by ULK3. In terms of processing, acetylation at Lys-520 down-regulates transcriptional activity. Deacetylated by HDAC1. Post-translationally, ubiquitinated by the CRL2(FEM1B) complex, suppressing GLI1 transcriptional activator activity.

It localises to the cytoplasm. It is found in the nucleus. Acts as a transcriptional activator. Binds to the DNA consensus sequence 5'-GACCACCCA-3'. Regulates the transcription of specific genes during normal development. Plays a role in craniofacial development and digital development, as well as development of the central nervous system and gastrointestinal tract. Mediates SHH signaling. Plays a role in cell proliferation and differentiation via its role in SHH signaling. The chain is Zinc finger protein GLI1 (Gli1) from Mus musculus (Mouse).